The following is a 149-amino-acid chain: Ribonuclease H (149 aa).

One can recognise an RNase H type-1 domain in the interval 1-142 (MSDSVELFTD…ADQLANRGVD (142 aa)). Mg(2+) contacts are provided by D10, E48, D70, and D134.

Belongs to the RNase H family. Monomer. Mg(2+) serves as cofactor.

It is found in the cytoplasm. The catalysed reaction is Endonucleolytic cleavage to 5'-phosphomonoester.. Functionally, endonuclease that specifically degrades the RNA of RNA-DNA hybrids. The polypeptide is Ribonuclease H (Pseudomonas savastanoi pv. phaseolicola (strain 1448A / Race 6) (Pseudomonas syringae pv. phaseolicola (strain 1448A / Race 6))).